We begin with the raw amino-acid sequence, 102 residues long: DET1- and DDB1-associated protein 1 (102 aa).

N-acetylalanine is present on Ala-2. Phosphoserine is present on Ser-33. Composition is skewed to basic and acidic residues over residues 66–75 and 91–102; these read KNAAKKRDQE and ARTDSPDMHEDT. A disordered region spans residues 66 to 102; the sequence is KNAAKKRDQEQVELEGESSAPPRKVARTDSPDMHEDT. A Phosphoserine modification is found at Ser-95.

It belongs to the DDA1 family. In terms of assembly, component of numerous DCX (DDB1-CUL4-X-box) E3 ubiquitin-protein ligase complexes which consist of a core of DDB1, cullin-4 (CUL4A or CUL4B), DDA1 and RBX1. Component of the DCX(DCAF15) complex, also named CLR4(DCAF15) complex, composed of DCAF15, DDB1, cullin-4 (CUL4A or CUL4B), DDA1 and RBX1. Part of the DDD core complex containing DET1, DDA1 and DDB1; the DDD core complex recruits a specific UBE2E enzyme, such as UBE2E1, UBE2E2 UBE2E3, to form specific DDD-E2 complexes.

Its pathway is protein modification; protein ubiquitination. Its function is as follows. Functions as a component of numerous distinct DCX (DDB1-CUL4-X-box) E3 ubiquitin-protein ligase complexes which mediate the ubiquitination and subsequent proteasomal degradation of target proteins. In the DCX complexes, acts as a scaffolding subunit required to stabilize the complex. The protein is DET1- and DDB1-associated protein 1 of Bos taurus (Bovine).